The chain runs to 383 residues: MKTELTLLDRTLTLHRFPNRSNETLQAWDAGDEYIISHVEEMNLEPGKHILIMNDSFGALSAWFSKDHDVTMMSDSFISHRGALKNLQRNQSNRVNFLNTMDDIPHGIDLVIMQLPKTNRHLVWQLSQLRQALPEGCQVIGVNKVKDIHTSTLNIFEKYLGETKTSLAKKKHRLVFSSPNCQPIQTVEPFVEWDVDGEDIRLKNLPNVYSGEALDQGARYMLEHIPQDPELRHIIDLGCGNGVLSVKAGQLNPQARITCVDESFMAVESARQNIKDNLGEEGNFQFIANNCLDGFKKNSTYLVMCNPPFHQQQAITDHIAWQMFCDAKHVLSNGGKLIVIGNRHLGYDVKLARLFGEANVETLELNQKFEILQATREPANFNK.

It belongs to the methyltransferase superfamily. RlmG family.

It localises to the cytoplasm. The catalysed reaction is guanosine(1835) in 23S rRNA + S-adenosyl-L-methionine = N(2)-methylguanosine(1835) in 23S rRNA + S-adenosyl-L-homocysteine + H(+). In terms of biological role, specifically methylates the guanine in position 1835 (m2G1835) of 23S rRNA. The polypeptide is Ribosomal RNA large subunit methyltransferase G (Vibrio atlanticus (strain LGP32) (Vibrio splendidus (strain Mel32))).